We begin with the raw amino-acid sequence, 122 residues long: UPF0102 protein CKL_1410 (122 aa).

It belongs to the UPF0102 family.

This is UPF0102 protein CKL_1410 from Clostridium kluyveri (strain ATCC 8527 / DSM 555 / NBRC 12016 / NCIMB 10680 / K1).